The primary structure comprises 59 residues: Large ribosomal subunit protein uL30 (59 aa).

The protein belongs to the universal ribosomal protein uL30 family. As to quaternary structure, part of the 50S ribosomal subunit.

This chain is Large ribosomal subunit protein uL30, found in Desulforamulus reducens (strain ATCC BAA-1160 / DSM 100696 / MI-1) (Desulfotomaculum reducens).